A 339-amino-acid chain; its full sequence is Tetraacyldisaccharide 4'-kinase (339 aa).

Residue 58-65 (NVGGVGKT) coordinates ATP.

It belongs to the LpxK family.

The catalysed reaction is a lipid A disaccharide + ATP = a lipid IVA + ADP + H(+). The protein operates within glycolipid biosynthesis; lipid IV(A) biosynthesis; lipid IV(A) from (3R)-3-hydroxytetradecanoyl-[acyl-carrier-protein] and UDP-N-acetyl-alpha-D-glucosamine: step 6/6. In terms of biological role, transfers the gamma-phosphate of ATP to the 4'-position of a tetraacyldisaccharide 1-phosphate intermediate (termed DS-1-P) to form tetraacyldisaccharide 1,4'-bis-phosphate (lipid IVA). This chain is Tetraacyldisaccharide 4'-kinase, found in Chromobacterium violaceum (strain ATCC 12472 / DSM 30191 / JCM 1249 / CCUG 213 / NBRC 12614 / NCIMB 9131 / NCTC 9757 / MK).